The sequence spans 359 residues: tRNA-specific 2-thiouridylase MnmA (359 aa).

ATP-binding positions include 10–17 (GISGGVDS) and Leu36. The Nucleophile role is filled by Cys101. An intrachain disulfide couples Cys101 to Cys197. An ATP-binding site is contributed by Gly125. An interaction with tRNA region spans residues 147–149 (KDQ). The active-site Cysteine persulfide intermediate is the Cys197. The interval 306-307 (RY) is interaction with tRNA.

The protein belongs to the MnmA/TRMU family.

It is found in the cytoplasm. It carries out the reaction S-sulfanyl-L-cysteinyl-[protein] + uridine(34) in tRNA + AH2 + ATP = 2-thiouridine(34) in tRNA + L-cysteinyl-[protein] + A + AMP + diphosphate + H(+). Functionally, catalyzes the 2-thiolation of uridine at the wobble position (U34) of tRNA, leading to the formation of s(2)U34. This Chlorobium chlorochromatii (strain CaD3) protein is tRNA-specific 2-thiouridylase MnmA.